Reading from the N-terminus, the 78-residue chain is D-alanyl carrier protein (78 aa).

One can recognise a Carrier domain in the interval 1 to 78 (MAFRENVLEI…MIITQLEALK (78 aa)). S36 is modified (O-(pantetheine 4'-phosphoryl)serine).

Belongs to the DltC family. 4'-phosphopantetheine is transferred from CoA to a specific serine of apo-DCP.

The protein resides in the cytoplasm. It participates in cell wall biogenesis; lipoteichoic acid biosynthesis. Its function is as follows. Carrier protein involved in the D-alanylation of lipoteichoic acid (LTA). The loading of thioester-linked D-alanine onto DltC is catalyzed by D-alanine--D-alanyl carrier protein ligase DltA. The DltC-carried D-alanyl group is further transferred to cell membrane phosphatidylglycerol (PG) by forming an ester bond, probably catalyzed by DltD. D-alanylation of LTA plays an important role in modulating the properties of the cell wall in Gram-positive bacteria, influencing the net charge of the cell wall. This Listeria innocua serovar 6a (strain ATCC BAA-680 / CLIP 11262) protein is D-alanyl carrier protein.